We begin with the raw amino-acid sequence, 411 residues long: MRCEILSVGTELLLGDILNTNSQYLSRRLAELGIPVYFHTTVGDNPERLKKALEIAFSRSDMVIATGGLGPTQDDLTKEVSAEFFNKKLVLHEESLKRIKEFFEKRGLALTEGNIKQAYIVEGSRVIPNDWGTAPGIILEEGNKILILLPGPPKEMIPMFETYVVPYLLSFSSGIIHSRVLRVCGIGESFMEEKVKDLIKTQTNPTIAPYAKEGEAILRVTARADTKEEAEKMIERVVEEIRKRLGDYIYGEGETSLEEVVVDLLSKKSLTISIAESCTGGLISARLVNVPGVSKFFKGSLVAYDNEIKIRELNVPREIIEKYGAVSSQCAMKMAEGVAQKMGTDIGLSATGIAGPEGGTPEKPVGLVYIGLYIRGELSYKELRLSGDRNRIRLYTTINALDFLRRGLLNL.

Belongs to the CinA family.

In Dictyoglomus thermophilum (strain ATCC 35947 / DSM 3960 / H-6-12), this protein is CinA-like protein.